Reading from the N-terminus, the 351-residue chain is tRNA-specific 2-thiouridylase MnmA (351 aa).

6–13 (ALSGGTDS) is a binding site for ATP. Residue Cys96 is the Nucleophile of the active site. An intrachain disulfide couples Cys96 to Cys193. Gly120 is a binding site for ATP. The interaction with tRNA stretch occupies residues 143 to 145 (KDQ). Cys193 functions as the Cysteine persulfide intermediate in the catalytic mechanism. Residues 298–299 (RY) form an interaction with tRNA region.

The protein belongs to the MnmA/TRMU family.

It localises to the cytoplasm. The enzyme catalyses S-sulfanyl-L-cysteinyl-[protein] + uridine(34) in tRNA + AH2 + ATP = 2-thiouridine(34) in tRNA + L-cysteinyl-[protein] + A + AMP + diphosphate + H(+). Catalyzes the 2-thiolation of uridine at the wobble position (U34) of tRNA, leading to the formation of s(2)U34. The sequence is that of tRNA-specific 2-thiouridylase MnmA from Nitratidesulfovibrio vulgaris (strain DSM 19637 / Miyazaki F) (Desulfovibrio vulgaris).